Consider the following 181-residue polypeptide: Transcriptional repressor NrdR (181 aa).

Residues 3–34 fold into a zinc finger; that stretch reads CPFCRHPDSRVVDSREAEEGSAIRRRRSCLSC. One can recognise an ATP-cone domain in the interval 46–136; the sequence is LQVRKRSGAA…VYLAFESLTD (91 aa). Positions 148–181 are disordered; sequence AAGPPTTRDGPARPVPRGAVDVSPVIGTQQVHSR.

This sequence belongs to the NrdR family. The cofactor is Zn(2+).

Negatively regulates transcription of bacterial ribonucleotide reductase nrd genes and operons by binding to NrdR-boxes. The chain is Transcriptional repressor NrdR from Frankia casuarinae (strain DSM 45818 / CECT 9043 / HFP020203 / CcI3).